The sequence spans 213 residues: Ras-related protein Rab-4B (213 aa).

Residue Ala2 is modified to N-acetylalanine. GDP is bound by residues Gly18, Thr19, Gly20, Lys21, Ser22, and Cys23. Gly18, Thr19, Gly20, Lys21, Ser22, Cys23, Ser37, His39, and Thr40 together coordinate GTP. Ser22 contributes to the Mg(2+) binding site. The Switch 1 motif lies at 39 to 44 (HTIGVE). 2 residues coordinate Mg(2+): Thr40 and Asp63. The Switch 2 signature appears at 65 to 74 (AGQERFRSVT). Gly66 is a GTP binding site. 5-glutamyl serotonin is present on Gln67. GDP is bound by residues Asn121, Lys122, Asp124, Ala152, and Leu153. 5 residues coordinate GTP: Asn121, Lys122, Asp124, Ala152, and Leu153. 2 positions are modified to phosphoserine: Ser185 and Ser193. Residues Cys211 and Cys213 are each lipidated (S-geranylgeranyl cysteine). Residue Cys213 is modified to Cysteine methyl ester.

Belongs to the small GTPase superfamily. Rab family. In terms of assembly, interacts (GTP-bound form) with RUFY1; the interaction allows endosomal tethering and fusion. Requires Mg(2+) as cofactor. In terms of processing, serotonylation of Gln-67 by TGM2 during activation and aggregation of platelets leads to constitutive activation of GTPase activity.

The protein resides in the cell membrane. It is found in the early endosome membrane. It catalyses the reaction GTP + H2O = GDP + phosphate + H(+). With respect to regulation, regulated by guanine nucleotide exchange factors (GEFs) which promote the exchange of bound GDP for free GTP. Regulated by GTPase activating proteins (GAPs) which increase the GTP hydrolysis activity. Inhibited by GDP dissociation inhibitors (GDIs). Functionally, the small GTPases Rab are key regulators of intracellular membrane trafficking, from the formation of transport vesicles to their fusion with membranes. Rabs cycle between an inactive GDP-bound form and an active GTP-bound form that is able to recruit to membranes different set of downstream effectors directly responsible for vesicle formation, movement, tethering and fusion. RAB4B mediates endosomal tethering and fusion through the interaction with RUFY1 and RAB14. Acts as a regulator of platelet alpha-granule release during activation and aggregation of platelets. The protein is Ras-related protein Rab-4B of Mus musculus (Mouse).